The sequence spans 512 residues: Cytochrome P450 26B1 (512 aa).

C441 serves as a coordination point for heme.

It belongs to the cytochrome P450 family. Requires heme as cofactor.

The protein resides in the endoplasmic reticulum membrane. It is found in the microsome membrane. The enzyme catalyses all-trans-retinoate + reduced [NADPH--hemoprotein reductase] + O2 = all-trans-4-hydroxyretinoate + oxidized [NADPH--hemoprotein reductase] + H2O + H(+). It catalyses the reaction all-trans-retinoate + reduced [NADPH--hemoprotein reductase] + O2 = all-trans-18-hydroxyretinoate + oxidized [NADPH--hemoprotein reductase] + H2O + H(+). In terms of biological role, a cytochrome P450 monooxygenase involved in the metabolism of retinoates (RAs), the active metabolites of vitamin A, and critical signaling molecules in animals. RAs exist as at least four different isomers: all-trans-RA (atRA), 9-cis-RA, 13-cis-RA, and 9,13-dicis-RA, where atRA is considered to be the biologically active isomer, although 9-cis-RA and 13-cis-RA also have activity. Catalyzes the hydroxylation of atRA primarily at C-4 and C-18, thereby contributing to the regulation of atRA homeostasis and signaling. Hydroxylation of atRA limits its biological activity and initiates a degradative process leading to its eventual elimination. Involved in the convertion of atRA to all-trans-4-oxo-RA. Can oxidize all-trans-13,14-dihydroretinoate (DRA) to metabolites which could include all-trans-4-oxo-DRA, all-trans-4-hydroxy-DRA, all-trans-5,8-epoxy-DRA, and all-trans-18-hydroxy-DRA. Shows preference for the following substrates: atRA &gt; 9-cis-RA &gt; 13-cis-RA. Plays a central role in germ cell development: acts by degrading RAs in the developing testis, preventing STRA8 expression, thereby leading to delay of meiosis. Required for the maintenance of the undifferentiated state of male germ cells during embryonic development in Sertoli cells, inducing arrest in G0 phase of the cell cycle and preventing meiotic entry. Plays a role in skeletal development, both at the level of patterning and in the ossification of bone and the establishment of some synovial joints. Essential for postnatal survival. Also has a significant activity in oxidation of tazarotenic acid and may therefore metabolize that xenobiotic in vivo. The chain is Cytochrome P450 26B1 (CYP26B1) from Bos taurus (Bovine).